The chain runs to 175 residues: NADH-ubiquinone oxidoreductase chain 6 (175 aa).

Helical transmembrane passes span 1–21, 25–45, 47–67, 88–108, and 149–169; these read MMTY…VGFS, SPIY…GIVL, FGGS…MLVV, AVLG…CYIL, and YGTW…LVIM.

The protein belongs to the complex I subunit 6 family. Core subunit of respiratory chain NADH dehydrogenase (Complex I) which is composed of 45 different subunits.

It is found in the mitochondrion inner membrane. It carries out the reaction a ubiquinone + NADH + 5 H(+)(in) = a ubiquinol + NAD(+) + 4 H(+)(out). Functionally, core subunit of the mitochondrial membrane respiratory chain NADH dehydrogenase (Complex I) which catalyzes electron transfer from NADH through the respiratory chain, using ubiquinone as an electron acceptor. Essential for the catalytic activity and assembly of complex I. The sequence is that of NADH-ubiquinone oxidoreductase chain 6 (MT-ND6) from Halichoerus grypus (Gray seal).